We begin with the raw amino-acid sequence, 320 residues long: Mitochondrial fission regulator 1-like-B (320 aa).

A disordered region spans residues 1 to 37 (MASLGAAAEPERSLFGKDGAEACESPEGRRSGRRKRT). Basic and acidic residues predominate over residues 9–30 (EPERSLFGKDGAEACESPEGRR).

Belongs to the MTFR1 family.

The protein localises to the mitochondrion outer membrane. Its function is as follows. Mitochondrial protein required for adaptation of miochondrial dynamics to metabolic changes. Regulates mitochondrial morphology at steady state and mediates AMPK-dependent stress-induced mitochondrial fragmentation via the control of OPA1 levels. This chain is Mitochondrial fission regulator 1-like-B (mtfr1l-b), found in Xenopus laevis (African clawed frog).